Consider the following 389-residue polypeptide: Probable transcription factor FL (389 aa).

Disordered regions lie at residues Met1–Pro41 and Glu140–Val226. A compositionally biased stretch (pro residues) spans Pro19–Asn39. The span at Val159–Lys180 shows a compositional bias: basic residues. The short motif at Gly161 to Gly168 is the Nuclear localization signal element. Over residues Gln190–Gly201 the composition is skewed to acidic residues. 3 consecutive DNA-binding regions follow at residues Arg221 to Phe225, Asn290 to Tyr297, and Tyr361 to Thr364.

Belongs to the FLO/LFY family. In terms of assembly, interacts with APO1. As to expression, in very young panicle but not in mature florets, mature leaves, roots or apical meristems.

Its subcellular location is the nucleus. Functionally, probable transcription factor. Together with APO1, involved in the temporal regulation of meristem size and identity during both vegetative and reproductive developments through interaction with APO1. Promotes flowering. In Oryza sativa subsp. japonica (Rice), this protein is Probable transcription factor FL.